The following is a 584-amino-acid chain: Nif-specific regulatory protein (584 aa).

The interval 1 to 24 (MTHMPARPVDGAEPLSALPAGPMR) is disordered. The GAF domain maps to 45-187 (RLEITLANVV…MVANLVSRTI (143 aa)). In terms of domain architecture, Sigma-54 factor interaction spans 229–457 (IIGDSPALQQ…LENCVRRTAT (229 aa)). Residues 257–264 (GESGTGKE) and 320–329 (ANGGTLLLDE) each bind ATP. Residues 458–541 (LARSSSIVSS…CPAMESRLTQ (84 aa)) are inter-domain linker. The a divalent metal cation site is built by cysteine 471 and cysteine 476. The tract at residues 495–518 (GHARSNVMPTSSPRSGGSIGASDE) is disordered. The tract at residues 542–584 (RDRLIEAMEKAGWVQAKAARILGLTPRQVGYALRQHRIEVKKL) is C-terminal DNA-binding domain. The H-T-H motif DNA-binding region spans 556-575 (QAKAARILGLTPRQVGYALR).

As to quaternary structure, interacts with sigma-54.

Its function is as follows. Required for activation of most nif operons, which are directly involved in nitrogen fixation. This chain is Nif-specific regulatory protein (nifA), found in Rhizobium etli (strain ATCC 51251 / DSM 11541 / JCM 21823 / NBRC 15573 / CFN 42).